Here is a 164-residue protein sequence, read N- to C-terminus: Decoration protein (164 aa).

The binding to the capsid hexamer stretch occupies residues 1 to 72 (MIDYSGLRTI…AIPPAPPAPP (72 aa)). In terms of domain architecture, Ig-like spans 71–164 (PPLTLSKDLT…VTVNPTVPGG (94 aa)).

In terms of assembly, interacts with the major capsid protein; each hexon binds a single copy of the decoration protein.

The protein localises to the virion. In terms of biological role, decoration protein that binds asymmetrically to the center of each capsid protein hexamer after capsid expansion. Stabilizes the capsid and protects from DNA release. The sequence is that of Decoration protein from Escherichia phage T5 (Enterobacteria phage T5).